The following is a 364-amino-acid chain: UDP-3-O-acylglucosamine N-acyltransferase (364 aa).

The active-site Proton acceptor is H267.

This sequence belongs to the transferase hexapeptide repeat family. LpxD subfamily. As to quaternary structure, homotrimer.

It carries out the reaction a UDP-3-O-[(3R)-3-hydroxyacyl]-alpha-D-glucosamine + a (3R)-hydroxyacyl-[ACP] = a UDP-2-N,3-O-bis[(3R)-3-hydroxyacyl]-alpha-D-glucosamine + holo-[ACP] + H(+). It functions in the pathway bacterial outer membrane biogenesis; LPS lipid A biosynthesis. Functionally, catalyzes the N-acylation of UDP-3-O-acylglucosamine using 3-hydroxyacyl-ACP as the acyl donor. Is involved in the biosynthesis of lipid A, a phosphorylated glycolipid that anchors the lipopolysaccharide to the outer membrane of the cell. The polypeptide is UDP-3-O-acylglucosamine N-acyltransferase (Bordetella petrii (strain ATCC BAA-461 / DSM 12804 / CCUG 43448)).